We begin with the raw amino-acid sequence, 432 residues long: Enolase (432 aa).

Q163 provides a ligand contact to (2R)-2-phosphoglycerate. E205 serves as the catalytic Proton donor. Residues D242, E285, and D312 each coordinate Mg(2+). Residues K337, R366, S367, and K388 each coordinate (2R)-2-phosphoglycerate. The active-site Proton acceptor is the K337.

The protein belongs to the enolase family. Requires Mg(2+) as cofactor.

The protein resides in the cytoplasm. The protein localises to the secreted. It is found in the cell surface. It carries out the reaction (2R)-2-phosphoglycerate = phosphoenolpyruvate + H2O. Its pathway is carbohydrate degradation; glycolysis; pyruvate from D-glyceraldehyde 3-phosphate: step 4/5. Functionally, catalyzes the reversible conversion of 2-phosphoglycerate (2-PG) into phosphoenolpyruvate (PEP). It is essential for the degradation of carbohydrates via glycolysis. In Bifidobacterium adolescentis (strain ATCC 15703 / DSM 20083 / NCTC 11814 / E194a), this protein is Enolase.